A 323-amino-acid chain; its full sequence is Transcription factor LUX (323 aa).

Disordered stretches follow at residues 1-25 (MGEE…WEMG), 53-139 (ERSR…DLSG), and 267-298 (GYHH…ESNP). Over residues 65–87 (SETTLSSLRGGSSGPNTSSSNNN) the composition is skewed to low complexity. Positions 139–200 (GKTLKRPRLV…HLQKYRLYLK (62 aa)) form a DNA-binding region, myb-like GARP.

As to quaternary structure, interacts with ELF3 and forms a complex with ELF3 and ELF4.

Its subcellular location is the nucleus. Transcription factor that is essential for the generation of the circadian clock oscillation. Is necessary for activation of CCA1 and LHY expression. Is coregulated with TOC1 and seems to be repressed by CCA1 and LHY by direct binding of these proteins to the evening element in the LUX promoter. Directly regulates the expression of PRR9, a major component of the morning transcriptional feedback circuit, by binding specific sites on PRR9 promoter. Binds to its own promoter, inducing a negative auto-regulatory feedback loop within the core clock. Binds to ELF3 and associates with ELF4 in a diurnal complex which is required for the expression of the growth-promoting transcription factors PIF4 and PIF5 and subsequent hypocotyl growth in the early evening. The protein is Transcription factor LUX (LUX) of Arabidopsis thaliana (Mouse-ear cress).